The primary structure comprises 77 residues: uncharacterized protein (77 aa).

Over residues 1–15 (MNRTSESVEPQQNEK) the composition is skewed to polar residues. Disordered regions lie at residues 1–20 (MNRT…AVHW) and 31–52 (TYSN…QRTF). Residues 33–44 (SNEDDEDNEEGD) show a composition bias toward acidic residues.

This is an uncharacterized protein from Schizosaccharomyces pombe (strain 972 / ATCC 24843) (Fission yeast).